The chain runs to 877 residues: MQVQGFFDRLTGRNKEAWKEGRIRGTAVLVKKDVLGLGDFHASLLDGVHNILGHKEGVAFRLVSATARDPSNGGRGKLGKPAHLEELVVTMKSTAAGESVFRVAFEWDESQGIPGAVVVTNSNRSEFFLKTLTLDGVPGKGTVVFVANSWIYPADNYQYERVFFANDTYLPSKMPAPLIPYRQEELNILRGDGKIGPYKEHDRIYRYDYYNDLGQPDKGSKLVRPVLGGSQELPYPRRGRTGRAPTKTDPNTESRLPLLDLNIYVPRDERFGHLKMSDFLGYSLKAIVEGVLPIIRTYVDTTPKEFDSFQDIMELYEGGLKVANASALAEIKKRVPFELIKSLLPVAGDQVLKLPLPHVIKEDKFAWRTDEEFAREMLAGVNPVMIKRLTNFPAKSTLDPNVYGDHTSKITEAHIKHNMEGLTVQNALKGNRLFILDHHDHFMPFLDKINKLDGNFIYASRTILLLKDDGTLKPLAIELSLPHPDGQQHGAVSKVYTPANTGVESQIWQLAKAYASVNDSAWHQLISHWLNTHAVIEPFVIATNRQLSVVHPVHKLLSPHYRDTMNINALARQTLINADGIFEKTVFPGKYALEMSSVVYKNWKFTEQALPVDLVKRGVAVPDPTSPYNVRLLIKDYPYAVDGLVIWWAIERWVGEYLAIYYPNDGVLRGDEELQAWWKEVREVGHGDLKDQDWWPKMDTVQELTRACTIIIWIASALHAAVNFGQYPYAGFLPNRPTVSRRPMPEPGTEEYAKLERGGDEADLVFIHTITSQFQTILGISLIEILSKHSSDEVYLGQRDTPEWTSDAKALDAFKRFGSRLVDIENRIKDMNGNSALKNRNGPVKMPYMLLYPNTSDVTKEKGQGLTAMGIPNSISI.

Residues 38–165 (GDFHASLLDG…NYQYERVFFA (128 aa)) form the PLAT domain. Positions 168 to 877 (TYLPSKMPAP…AMGIPNSISI (710 aa)) constitute a Lipoxygenase domain. The disordered stretch occupies residues 229-252 (GSQELPYPRRGRTGRAPTKTDPNT). The Fe cation site is built by His-528, His-533, His-719, Asn-723, and Ile-877.

It belongs to the lipoxygenase family. Fe cation is required as a cofactor.

It catalyses the reaction (9Z,12Z)-octadecadienoate + O2 = (9S)-hydroperoxy-(10E,12Z)-octadecadienoate. The protein operates within lipid metabolism; oxylipin biosynthesis. In terms of biological role, plant lipoxygenase may be involved in a number of diverse aspects of plant physiology including growth and development, pest resistance, and senescence or responses to wounding. Catalyzes the hydroperoxidation of lipids containing a cis,cis-1,4-pentadiene structure. The chain is Probable linoleate 9S-lipoxygenase 4 from Oryza sativa subsp. japonica (Rice).